Here is a 641-residue protein sequence, read N- to C-terminus: 1-phosphatidylinositol 4,5-bisphosphate phosphodiesterase zeta-1 (641 aa).

Residues 35 to 70 (CSYIHVKRIFKDNDRLKQGRITIEEFRAIYRILTHR) enclose the EF-hand domain. Residues 155–299 (QDMTHPLNDY…LKFKVLVKNK (145 aa)) enclose the PI-PLC X-box domain. Residues H170 and H215 contribute to the active site. Residues 382–498 (LSDLVIYTKA…GYILKPHFLR (117 aa)) form the PI-PLC Y-box domain. One can recognise a C2 domain in the interval 498 to 622 (RESESYFNPS…KGYRRVPLFS (125 aa)).

As to quaternary structure, interacts via its C2 domain with PtdIns(3)P and, to a lesser extent, PtdIns(5)P in vitro. It depends on Ca(2+) as a cofactor.

It is found in the nucleus. It localises to the cytoplasm. The protein localises to the perinuclear region. It catalyses the reaction a 1,2-diacyl-sn-glycero-3-phospho-(1D-myo-inositol-4,5-bisphosphate) + H2O = 1D-myo-inositol 1,4,5-trisphosphate + a 1,2-diacyl-sn-glycerol + H(+). Its function is as follows. The production of the second messenger molecules diacylglycerol (DAG) and inositol 1,4,5-trisphosphate (IP3) is mediated by activated phosphatidylinositol-specific phospholipase C enzymes. In vitro, hydrolyzes PtdIns(4,5)P2 in a Ca(2+)-dependent manner. Triggers intracellular Ca(2+) oscillations in oocytes solely during M phase and is involved in inducing oocyte activation and initiating embryonic development up to the blastocyst stage. Is therefore a strong candidate for the egg-activating soluble sperm factor that is transferred from the sperm into the egg cytoplasm following gamete membrane fusion. May exert an inhibitory effect on phospholipase-C-coupled processes that depend on calcium ions and protein kinase C, including CFTR trafficking and function. The protein is 1-phosphatidylinositol 4,5-bisphosphate phosphodiesterase zeta-1 of Macaca fascicularis (Crab-eating macaque).